The primary structure comprises 156 residues: Small ribosomal subunit protein uS7 (156 aa).

It belongs to the universal ribosomal protein uS7 family. Part of the 30S ribosomal subunit. Contacts proteins S9 and S11.

In terms of biological role, one of the primary rRNA binding proteins, it binds directly to 16S rRNA where it nucleates assembly of the head domain of the 30S subunit. Is located at the subunit interface close to the decoding center, probably blocks exit of the E-site tRNA. The chain is Small ribosomal subunit protein uS7 from Rhodospirillum rubrum (strain ATCC 11170 / ATH 1.1.1 / DSM 467 / LMG 4362 / NCIMB 8255 / S1).